A 537-amino-acid polypeptide reads, in one-letter code: Serendipity locus protein alpha (537 aa).

It is found in the cytoplasm. The protein resides in the cell membrane. Functionally, required for the cellularization of the syncytial blastoderm embryo. Involved in the localization of the actin filaments just prior to and during plasma membrane invagination. Sry-alpha together with nullo and bnk may provide auxiliary functions, by acting both to stabilize a large and dynamic microfilament structure and regulate its functions. The sequence is that of Serendipity locus protein alpha (Sry-alpha) from Drosophila virilis (Fruit fly).